A 476-amino-acid chain; its full sequence is MSYAQTKTQTKSGYKAGVQDYRLTYYTPDYTPKDTDILAAFRVTPQPGVPFEEAAAAVAAESSTGTWTTVWTDLLTDLDRYKGRCYDIEPVPGEDNQFIAYIAYPLDLFEEGSITNVLTSIVGNVFGFKALRALRLEDIRFPVAYIKTFQGPPHGIQVERDKLNKYGRPLLGCTIKPKLGLSAKNYGRAVYECLRGGLDFTKDDENINSAPFQRWRDRFLFVSDAISKAQAETGEIKGHYLNVTAPTCEEMLKRAEYAKELNQPIIMHDYLTAGFTANTTLARWCRDNGVLLHIHRAMHAVIDRQKNHGIHFRVLAKALRLSGGDHIHTGTVVGKLEGERGITMGFVDLLRENYVEQDKSRGIYFTQDWASLPGVMAVASGGIHVWHMPALVEIFGDDSVLQFGGGTLGHPWGNAPGATANRVALEACVQARNEGRNLAREGNDVIREAAKWSPELAVACELWKEIKFEFEAMDTV.

Residues Asn-124 and Thr-174 each contribute to the substrate site. Lys-176 serves as the catalytic Proton acceptor. Residue Lys-178 coordinates substrate. 3 residues coordinate Mg(2+): Lys-202, Asp-204, and Glu-205. An N6-carboxylysine modification is found at Lys-202. Catalysis depends on His-295, which acts as the Proton acceptor. Positions 296, 328, and 380 each coordinate substrate.

This sequence belongs to the RuBisCO large chain family. Type I subfamily. As to quaternary structure, heterohexadecamer of 8 large chains and 8 small chains; disulfide-linked. The disulfide link is formed within the large subunit homodimers. It depends on Mg(2+) as a cofactor. The disulfide bond which can form in the large chain dimeric partners within the hexadecamer appears to be associated with oxidative stress and protein turnover.

The protein resides in the carboxysome. The catalysed reaction is 2 (2R)-3-phosphoglycerate + 2 H(+) = D-ribulose 1,5-bisphosphate + CO2 + H2O. It carries out the reaction D-ribulose 1,5-bisphosphate + O2 = 2-phosphoglycolate + (2R)-3-phosphoglycerate + 2 H(+). In terms of biological role, ruBisCO catalyzes two reactions: the carboxylation of D-ribulose 1,5-bisphosphate, the primary event in carbon dioxide fixation, as well as the oxidative fragmentation of the pentose substrate in the photorespiration process. Both reactions occur simultaneously and in competition at the same active site. The protein is Ribulose bisphosphate carboxylase large chain of Trichormus variabilis (strain ATCC 29413 / PCC 7937) (Anabaena variabilis).